Here is a 242-residue protein sequence, read N- to C-terminus: ATP synthase subunit a (242 aa).

Helical transmembrane passes span 21–41, 83–103, 117–137, 175–195, and 198–218; these read LSSI…AIIC, AVTL…FSIV, DATV…FYGI, LYGN…LFFN, and AWGW…SIFV.

Belongs to the ATPase A chain family. As to quaternary structure, F-type ATPases have 2 components, CF(1) - the catalytic core - and CF(0) - the membrane proton channel. CF(1) has five subunits: alpha(3), beta(3), gamma(1), delta(1), epsilon(1). CF(0) has three main subunits: a(1), b(2) and c(9-12). The alpha and beta chains form an alternating ring which encloses part of the gamma chain. CF(1) is attached to CF(0) by a central stalk formed by the gamma and epsilon chains, while a peripheral stalk is formed by the delta and b chains.

It is found in the cell membrane. Key component of the proton channel; it plays a direct role in the translocation of protons across the membrane. This is ATP synthase subunit a from Staphylococcus aureus (strain Newman).